A 1500-amino-acid chain; its full sequence is Myosin-8 (1500 aa).

In terms of domain architecture, Myosin N-terminal SH3-like spans 8 to 57 (AVGSHVWVEDPDEAWLDGEVVEINGDQIKVLCASGKQVVVKDSNIYPKDV). Residues 62 to 732 (SGVEDMTRLA…QMADLDTRRT (671 aa)) enclose the Myosin motor domain. ATP-binding positions include 156-163 (GESGAGKT) and 210-218 (NNNSSRFGK). Actin-binding stretches follow at residues 496–530 (LIEK…YQTY), 532–555 (NHKR…AGDV), 590–613 (FPPV…KQQL), and 613–635 (LVSL…KPNN). IQ domains follow at residues 735–764 (LGRS…SATQ), 758–787 (LRIS…EAAA), 783–812 (REAA…ATIL), 806–835 (LFSA…TKAA), 831–860 (QTKA…AAIT), and 854–883 (LKKA…AARE). Residues 884–1049 (TGALQEAKNK…TEKQIMLQQT (166 aa)) adopt a coiled-coil conformation. Residues 1146–1447 (DRLIEMIGSA…ISSMRALMTE (302 aa)) enclose the Dilute domain.

The protein belongs to the TRAFAC class myosin-kinesin ATPase superfamily. Myosin family. Plant myosin class XI subfamily. As to quaternary structure, homodimer.

The protein localises to the cytoplasm. Myosin heavy chain that is required for the cell cycle-regulated transport of various organelles and proteins for their segregation. Functions by binding with its tail domain to receptor proteins on organelles and exerting force with its N-terminal motor domain against actin filaments, thereby transporting its cargo along polarized actin cables. This is Myosin-8 (XI-B) from Arabidopsis thaliana (Mouse-ear cress).